The chain runs to 280 residues: Ribosomal RNA small subunit methyltransferase A (280 aa).

6 residues coordinate S-adenosyl-L-methionine: N18, L20, G45, E66, D89, and N110.

The protein belongs to the class I-like SAM-binding methyltransferase superfamily. rRNA adenine N(6)-methyltransferase family. RsmA subfamily.

It is found in the cytoplasm. The catalysed reaction is adenosine(1518)/adenosine(1519) in 16S rRNA + 4 S-adenosyl-L-methionine = N(6)-dimethyladenosine(1518)/N(6)-dimethyladenosine(1519) in 16S rRNA + 4 S-adenosyl-L-homocysteine + 4 H(+). Its function is as follows. Specifically dimethylates two adjacent adenosines (A1518 and A1519) in the loop of a conserved hairpin near the 3'-end of 16S rRNA in the 30S particle. May play a critical role in biogenesis of 30S subunits. The polypeptide is Ribosomal RNA small subunit methyltransferase A (Cupriavidus necator (strain ATCC 17699 / DSM 428 / KCTC 22496 / NCIMB 10442 / H16 / Stanier 337) (Ralstonia eutropha)).